The following is a 299-amino-acid chain: Acetylglutamate kinase (299 aa).

Substrate-binding positions include 70–71 (GG), Arg-92, and Asn-186.

Belongs to the acetylglutamate kinase family. ArgB subfamily.

It is found in the cytoplasm. The enzyme catalyses N-acetyl-L-glutamate + ATP = N-acetyl-L-glutamyl 5-phosphate + ADP. It functions in the pathway amino-acid biosynthesis; L-arginine biosynthesis; N(2)-acetyl-L-ornithine from L-glutamate: step 2/4. In terms of biological role, catalyzes the ATP-dependent phosphorylation of N-acetyl-L-glutamate. The polypeptide is Acetylglutamate kinase (Thermoanaerobacter pseudethanolicus (strain ATCC 33223 / 39E) (Clostridium thermohydrosulfuricum)).